Reading from the N-terminus, the 581-residue chain is MKSHIESLLAQALDVLKQQEVIPTDFEARIQVDRTKDKTHGDFATNLAMMLTKIARKNPREIAQLIIDSLPEDAQVSKVEIAGPGFINFFIDDSALANQLMTALNDDRLGIALPQAQTVVVDYSSPNLAKEMHVGHLRSTIIGDSVVRALEFMGHKVIRQNHVGDWGTQFGMLLAYMEELRAQSGEQAQMELSDLETFYRAAKVRFDESEEFATRARKLVVALQSGDEYCNKLWREFNDISLSHCHEVYERLGVSLTRADVRGESAYNDDLAQVVRDLDSQGLLSESNGAKVVFQDEFKNKEGEPLPVIIQKADGGYLYATSDMAAMRYRANVLKADRALYFVDLRQALHFQQVFKLARKANFVDDNISLEHMGFGTMNGDDGRPFKTRSGGVVKLVDLLSEADTRALELVRSKNPDMDEAELAKIAKVVGISSVKYADLSKNRASDYIFSFEQMLSFEGNTAPYLLYAYTRVAGIFKRATDVDLSDAKIQLEHEKEKELGTKLAQFNEVLTRMVSKGQPHALCGYLFELAGAFSSFYEACPVLAADTEEQKKSRLLLAKLTAKTLKQGLGLLGIETLERM.

Positions 126–136 (PNLAKEMHVGH) match the 'HIGH' region motif.

It belongs to the class-I aminoacyl-tRNA synthetase family. As to quaternary structure, monomer.

The protein resides in the cytoplasm. It carries out the reaction tRNA(Arg) + L-arginine + ATP = L-arginyl-tRNA(Arg) + AMP + diphosphate. This is Arginine--tRNA ligase from Shewanella woodyi (strain ATCC 51908 / MS32).